A 308-amino-acid chain; its full sequence is Pseudouridine-5'-phosphate glycosidase (308 aa).

Glu-26 (proton donor) is an active-site residue. Substrate is bound by residues Lys-87 and Val-107. Asp-139 lines the Mn(2+) pocket. 141 to 143 (SAD) is a substrate binding site. The Nucleophile role is filled by Lys-160.

It belongs to the pseudouridine-5'-phosphate glycosidase family. In terms of assembly, homotrimer. The cofactor is Mn(2+).

The enzyme catalyses D-ribose 5-phosphate + uracil = psi-UMP + H2O. Functionally, catalyzes the reversible cleavage of pseudouridine 5'-phosphate (PsiMP) to ribose 5-phosphate and uracil. Functions biologically in the cleavage direction, as part of a pseudouridine degradation pathway. This Legionella pneumophila subsp. pneumophila (strain Philadelphia 1 / ATCC 33152 / DSM 7513) protein is Pseudouridine-5'-phosphate glycosidase.